A 439-amino-acid polypeptide reads, in one-letter code: Protein translocase subunit SecY (439 aa).

10 consecutive transmembrane segments (helical) span residues 19–39 (ILFTIFILFVFRLGAHITAPG), 68–88 (YSLFAMGVSPYITASIIVQLL), 116–136 (YITLVLAMAQSIGITAGFQAM), 151–171 (LMIGVLLTTGSMVVTWMGEQI), 176–196 (FGSGVSVIIFAGIVSGIPSAI), 216–236 (WIFVIGLILSAIVIIYVTTFV), 269–289 (VIPVIFAGSITTAPATILQFL), 312–332 (WTGMLFYALLIVLFTFFYSFV), 373–393 (VGSLFLGLISIIPIAAQNVWG), and 396–416 (KIVALGGTSLLILIQVAIQAV).

Belongs to the SecY/SEC61-alpha family. As to quaternary structure, component of the Sec protein translocase complex. Heterotrimer consisting of SecY, SecE and SecG subunits. The heterotrimers can form oligomers, although 1 heterotrimer is thought to be able to translocate proteins. Interacts with the ribosome. Interacts with SecDF, and other proteins may be involved. Interacts with SecA.

The protein localises to the cell membrane. In terms of biological role, the central subunit of the protein translocation channel SecYEG. Consists of two halves formed by TMs 1-5 and 6-10. These two domains form a lateral gate at the front which open onto the bilayer between TMs 2 and 7, and are clamped together by SecE at the back. The channel is closed by both a pore ring composed of hydrophobic SecY resides and a short helix (helix 2A) on the extracellular side of the membrane which forms a plug. The plug probably moves laterally to allow the channel to open. The ring and the pore may move independently. This Lactococcus lactis subsp. cremoris (Streptococcus cremoris) protein is Protein translocase subunit SecY.